The following is a 163-amino-acid chain: Campylobacter invasion antigen D (163 aa).

Positions 135–145 match the MKD motif; it reads KKDDLENRLNL.

In terms of assembly, interacts with the host cell protein IQGAP1, thus displacing RACGAP1 from the IQGAP1 complex.

The protein localises to the secreted. The protein resides in the host cytoplasm. It localises to the host cytosol. Effector protein required for the development of acute disease and colon inflammatory lesions. Required for maximal host cell invasion and maximal secretion of the inflammatory chemokine interleukin-8 (IL-8) from host cells. Acts by activating the host MAP kinase signaling pathways ERK-1/2 and p38 to promote both cellular invasion and the release of IL-8. CiaD mediated activation of ERK-1/2 leads to the phosphorylation of host cortactin (CTTN) on serine residues and association of cortactin with N-WASP, promoting actin cytoskeleton rearrangement, membrane ruffling and host cell invasion. In addition, maximal host cell invasion requires interaction with the host cell protein IQGAP1, a Ras GTPase-activating-like protein. Binding to IQGAP1 facilitates the activation of the Rho GTPases RAC1 and CDC42, further promoting actin reorganization and bacterial uptake. CiaD promotes RAC1 activation by excluding RACGAP1 from the IQGAP1 complex, preventing the deactivation of RAC1. CiaD probably activates ERK signaling upstream or independently of IQGAP1. This chain is Campylobacter invasion antigen D, found in Campylobacter jejuni subsp. jejuni serotype O:2 (strain ATCC 700819 / NCTC 11168).